The sequence spans 277 residues: Protein OPG166 (277 aa).

Residues asparagine 29 and asparagine 58 are each glycosylated (N-linked (GlcNAc...) asparagine; by host). Transmembrane regions (helical) follow at residues 124-144 (TMLM…EIAY), 156-176 (GILQ…AFLF), 186-206 (IIGL…KVFS), 219-239 (LIIY…GLSL), and 247-267 (LLLS…LFLV).

Belongs to the orthopoxvirus OPG166 protein family.

The protein resides in the host membrane. Its function is as follows. Promotes, when overexpressed, the influx of extracellular Ca(2+), leading to membrane permeability and host cell necrosis. The chain is Protein OPG166 (OPG166) from Cynomys gunnisoni (Gunnison's prairie dog).